The primary structure comprises 445 residues: Ribosomal protein uS12 methylthiotransferase RimO (445 aa).

The region spanning 4–119 (LKFGLVSLGC…LDDAIEDFFN (116 aa)) is the MTTase N-terminal domain. [4Fe-4S] cluster contacts are provided by Cys13, Cys48, Cys82, Cys156, Cys160, and Cys163. The 231-residue stretch at 142-372 (TTGEYSSYVR…MLIQQQVSKN (231 aa)) folds into the Radical SAM core domain. Residues 375–441 (AKKIGKVYKV…EYDLIGVVYN (67 aa)) form the TRAM domain.

Belongs to the methylthiotransferase family. RimO subfamily. It depends on [4Fe-4S] cluster as a cofactor.

The protein localises to the cytoplasm. It carries out the reaction L-aspartate(89)-[ribosomal protein uS12]-hydrogen + (sulfur carrier)-SH + AH2 + 2 S-adenosyl-L-methionine = 3-methylsulfanyl-L-aspartate(89)-[ribosomal protein uS12]-hydrogen + (sulfur carrier)-H + 5'-deoxyadenosine + L-methionine + A + S-adenosyl-L-homocysteine + 2 H(+). Functionally, catalyzes the methylthiolation of an aspartic acid residue of ribosomal protein uS12. This Clostridium acetobutylicum (strain ATCC 824 / DSM 792 / JCM 1419 / IAM 19013 / LMG 5710 / NBRC 13948 / NRRL B-527 / VKM B-1787 / 2291 / W) protein is Ribosomal protein uS12 methylthiotransferase RimO.